Here is a 211-residue protein sequence, read N- to C-terminus: Cytidylate kinase (211 aa).

9–17 (GPAAAGKGT) provides a ligand contact to ATP.

The protein belongs to the cytidylate kinase family. Type 1 subfamily.

The protein localises to the cytoplasm. The catalysed reaction is CMP + ATP = CDP + ADP. It catalyses the reaction dCMP + ATP = dCDP + ADP. The polypeptide is Cytidylate kinase (Paramagnetospirillum magneticum (strain ATCC 700264 / AMB-1) (Magnetospirillum magneticum)).